Reading from the N-terminus, the 292-residue chain is GTP cyclohydrolase FolE2 (292 aa).

The protein belongs to the GTP cyclohydrolase IV family.

It catalyses the reaction GTP + H2O = 7,8-dihydroneopterin 3'-triphosphate + formate + H(+). The protein operates within cofactor biosynthesis; 7,8-dihydroneopterin triphosphate biosynthesis; 7,8-dihydroneopterin triphosphate from GTP: step 1/1. Its function is as follows. Converts GTP to 7,8-dihydroneopterin triphosphate. The chain is GTP cyclohydrolase FolE2 from Staphylococcus aureus (strain MRSA252).